A 267-amino-acid polypeptide reads, in one-letter code: 4-hydroxy-tetrahydrodipicolinate reductase (267 aa).

Residues 8-13 (GAAGRM) and E34 contribute to the NAD(+) site. R35 is a binding site for NADP(+). Residues 98–100 (GST) and 122–125 (APNM) each bind NAD(+). The active-site Proton donor/acceptor is H155. H156 is a (S)-2,3,4,5-tetrahydrodipicolinate binding site. K159 acts as the Proton donor in catalysis. 165-166 (GT) contributes to the (S)-2,3,4,5-tetrahydrodipicolinate binding site.

Belongs to the DapB family.

The protein localises to the cytoplasm. The catalysed reaction is (S)-2,3,4,5-tetrahydrodipicolinate + NAD(+) + H2O = (2S,4S)-4-hydroxy-2,3,4,5-tetrahydrodipicolinate + NADH + H(+). It carries out the reaction (S)-2,3,4,5-tetrahydrodipicolinate + NADP(+) + H2O = (2S,4S)-4-hydroxy-2,3,4,5-tetrahydrodipicolinate + NADPH + H(+). Its pathway is amino-acid biosynthesis; L-lysine biosynthesis via DAP pathway; (S)-tetrahydrodipicolinate from L-aspartate: step 4/4. In terms of biological role, catalyzes the conversion of 4-hydroxy-tetrahydrodipicolinate (HTPA) to tetrahydrodipicolinate. This chain is 4-hydroxy-tetrahydrodipicolinate reductase, found in Citrifermentans bemidjiense (strain ATCC BAA-1014 / DSM 16622 / JCM 12645 / Bem) (Geobacter bemidjiensis).